The primary structure comprises 340 residues: Organic solute transporter subunit alpha (340 aa).

The Extracellular segment spans residues 1–52; sequence MEPDRTQIRLDPRYTADLLEILKTNYSVPSACFSYPPTAAQLLRALGPVDIS. Asparagine 25 carries N-linked (GlcNAc...) asparagine glycosylation. Residues 53–73 form a helical membrane-spanning segment; it reads LMVIMTLFVLGSIAIFLEAAV. Residues 74 to 87 are Cytoplasmic-facing; the sequence is YLHKNTRCPIKRKT. A helical transmembrane segment spans residues 88–108; the sequence is LIWCSSSPTIVSAFSCFGLWI. The Extracellular segment spans residues 109-110; sequence PR. A helical membrane pass occupies residues 111-131; it reads ALTLVEMAITTFYSMCFYLLM. Over 132–186 the chain is Cytoplasmic; it reads QAMVEGFGGKEAVLRTLKDTPVMIHTGPCCCCCPCCPRIKITRKRLQLLLLGPIQ. A helical membrane pass occupies residues 187–207; it reads YAFFKISLTLVGLFLIPDGIF. Residues 208 to 219 are Extracellular-facing; that stretch reads DPSDISEGSTAL. Residues 220-240 form a helical membrane-spanning segment; it reads WINTFLGVSTLSALWTIGIIF. Topologically, residues 241-255 are cytoplasmic; the sequence is RQARLHLGEQNIGAK. Residues 256–276 form a helical membrane-spanning segment; sequence FVLFQALLILSALQPSIFSVL. Residues 277 to 295 are Extracellular-facing; that stretch reads ASGGQIACSPPFSSKIRSQ. A helical membrane pass occupies residues 296-316; that stretch reads VMNCHLLILESFLITVLTRIY. Residues 317 to 340 lie on the Cytoplasmic side of the membrane; sequence YRRKDDKLGYEPFSSPDQDLNLKA. Position 330 is a phosphoserine (serine 330).

Belongs to the OST-alpha family. Interacts with SLC51B. The Ost-alpha/Ost-beta complex is a heterodimer composed of alpha (SLC51A) and beta (SLC51B) subunit.

The protein resides in the cell membrane. It localises to the endoplasmic reticulum membrane. It carries out the reaction taurocholate(out) = taurocholate(in). It catalyses the reaction estrone 3-sulfate(out) = estrone 3-sulfate(in). The catalysed reaction is dehydroepiandrosterone 3-sulfate(out) = dehydroepiandrosterone 3-sulfate(in). The enzyme catalyses tauroursodeoxycholate(out) = tauroursodeoxycholate(in). It carries out the reaction glycoursodeoxycholate(out) = glycoursodeoxycholate(in). It catalyses the reaction glycocholate(out) = glycocholate(in). The catalysed reaction is taurochenodeoxycholate(out) = taurochenodeoxycholate(in). The enzyme catalyses glycochenodeoxycholate(out) = glycochenodeoxycholate(in). It carries out the reaction taurodeoxycholate(out) = taurodeoxycholate(in). It catalyses the reaction glycodeoxycholate(out) = glycodeoxycholate(in). The catalysed reaction is prostaglandin E2(out) = prostaglandin E2(in). In terms of biological role, essential component of the Ost-alpha/Ost-beta complex, a heterodimer that acts as the intestinal basolateral transporter responsible for bile acid export from enterocytes into portal blood. Efficiently transports the major species of bile acids (taurocholate). Taurine conjugates are transported more efficiently across the basolateral membrane than glycine-conjugated bile acids. Can also transport steroids such as estrone 3-sulfate and dehydroepiandrosterone 3-sulfate, therefore playing a role in the enterohepatic circulation of sterols. Able to transport eicosanoids such as prostaglandin E2. This chain is Organic solute transporter subunit alpha (SLC51A), found in Bos taurus (Bovine).